A 420-amino-acid polypeptide reads, in one-letter code: UDP-N-acetylglucosamine 1-carboxyvinyltransferase (420 aa).

Residue 22 to 23 (KN) coordinates phosphoenolpyruvate. Arg93 contributes to the UDP-N-acetyl-alpha-D-glucosamine binding site. Cys117 (proton donor) is an active-site residue. Cys117 bears the 2-(S-cysteinyl)pyruvic acid O-phosphothioketal mark. Positions 307 and 329 each coordinate UDP-N-acetyl-alpha-D-glucosamine.

This sequence belongs to the EPSP synthase family. MurA subfamily.

Its subcellular location is the cytoplasm. The catalysed reaction is phosphoenolpyruvate + UDP-N-acetyl-alpha-D-glucosamine = UDP-N-acetyl-3-O-(1-carboxyvinyl)-alpha-D-glucosamine + phosphate. It functions in the pathway cell wall biogenesis; peptidoglycan biosynthesis. Cell wall formation. Adds enolpyruvyl to UDP-N-acetylglucosamine. This Cellvibrio japonicus (strain Ueda107) (Pseudomonas fluorescens subsp. cellulosa) protein is UDP-N-acetylglucosamine 1-carboxyvinyltransferase.